A 554-amino-acid chain; its full sequence is Glutamine--tRNA ligase (554 aa).

The short motif at Pro34–His44 is the 'HIGH' region element. ATP contacts are provided by residues Glu35–Asn37 and His41–Ser47. Asp67 and Tyr212 together coordinate L-glutamine. Residues Thr231, Arg261 to Leu262, and Met269 to Lys271 contribute to the ATP site. The 'KMSKS' region signature appears at Val268–Arg272. The tract at residues Thr317–Glu324 is interaction with tRNA.

Belongs to the class-I aminoacyl-tRNA synthetase family. As to quaternary structure, monomer.

The protein resides in the cytoplasm. The catalysed reaction is tRNA(Gln) + L-glutamine + ATP = L-glutaminyl-tRNA(Gln) + AMP + diphosphate. This chain is Glutamine--tRNA ligase, found in Escherichia coli (strain 55989 / EAEC).